The sequence spans 474 residues: Calcitonin receptor (474 aa).

A signal peptide spans M1–P24. Topologically, residues A25–Y146 are extracellular. Residues N28, N73, N125, and N130 are each glycosylated (N-linked (GlcNAc...) asparagine). 3 cysteine pairs are disulfide-bonded: C55-C81, C72-C112, and C95-C134. Residues V147 to I169 form a helical membrane-spanning segment. The Cytoplasmic portion of the chain corresponds to F170 to V181. A helical membrane pass occupies residues T182–L202. At V203–C219 the chain is on the extracellular side. An intrachain disulfide couples C219 to C289. Residues K220–I242 form a helical membrane-spanning segment. Residues Y243–L259 are Cytoplasmic-facing. A helical membrane pass occupies residues R260–T280. Residues R281–H296 are Extracellular-facing. The chain crosses the membrane as a helical span at residues L297 to V320. The Cytoplasmic segment spans residues R321–K340. Residues A341 to F359 form a helical membrane-spanning segment. Residues P360 to M367 are Extracellular-facing. Residues L368 to C394 traverse the membrane as a helical segment. The Cytoplasmic segment spans residues N395 to A474.

It belongs to the G-protein coupled receptor 2 family. As to quaternary structure, heterodimer of CALCR and RAMP1, RAMP2 or RAMP3; the receptor complexes function as AMYR1, AMYR2 and AMYR3 receptors, respectively, and respond to amylin/IAPP, calcitonin/CT and CGRP1 ligands. Interacts with GPRASP2.

The protein resides in the cell membrane. With respect to regulation, sensitive to cholera toxin. In terms of biological role, g protein-coupled receptor activated by ligand peptides amylin (IAPP), calcitonin (CT/CALCA) and calcitonin gene-related peptide type 1 (CGRP1/CALCA). CALCR interacts with receptor-activity-modifying proteins RAMP1, 2 and 3 to form receptor complexes AMYR1, 2 and 3, respectively. IAPP, CT and CGRP1 activate CALCR and AMYRs with distinct modes of receptor activation resulting in specific phenotypes. Ligand binding causes a conformation change that triggers signaling via guanine nucleotide-binding proteins (G proteins) and modulates the activity of downstream effectors. Activates cAMP-dependent pathway. Functionally, non-functional protein. Unable to couple to G proteins and activate adenylyl cyclase. Does not undergo receptor internalization following ligand binding. The polypeptide is Calcitonin receptor (Homo sapiens (Human)).